Consider the following 118-residue polypeptide: Large ribosomal subunit protein bL20 (118 aa).

Belongs to the bacterial ribosomal protein bL20 family.

Its function is as follows. Binds directly to 23S ribosomal RNA and is necessary for the in vitro assembly process of the 50S ribosomal subunit. It is not involved in the protein synthesizing functions of that subunit. The protein is Large ribosomal subunit protein bL20 of Staphylococcus haemolyticus (strain JCSC1435).